A 941-amino-acid polypeptide reads, in one-letter code: UvrABC system protein A (941 aa).

Residue 37 to 44 (GLSGSGKS) participates in ATP binding. The C4-type zinc-finger motif lies at 260-287 (CFKCKMSFEELEPLSFSFNSPKGACESC). ABC transporter domains are found at residues 316 to 585 (IFGY…NNHS) and 605 to 937 (KEKH…KFLA). An ATP-binding site is contributed by 637–644 (GVSGSGKS). The C4-type zinc finger occupies 737-763 (CEKCQGDGDIKIEMHFLPDVLVQCDSC).

The protein belongs to the ABC transporter superfamily. UvrA family. As to quaternary structure, forms a heterotetramer with UvrB during the search for lesions.

The protein resides in the cytoplasm. Functionally, the UvrABC repair system catalyzes the recognition and processing of DNA lesions. UvrA is an ATPase and a DNA-binding protein. A damage recognition complex composed of 2 UvrA and 2 UvrB subunits scans DNA for abnormalities. When the presence of a lesion has been verified by UvrB, the UvrA molecules dissociate. The sequence is that of UvrABC system protein A from Helicobacter pylori (strain J99 / ATCC 700824) (Campylobacter pylori J99).